A 503-amino-acid chain; its full sequence is Aspartyl/glutamyl-tRNA(Asn/Gln) amidotransferase subunit B (503 aa).

The protein belongs to the GatB/GatE family. GatB subfamily. In terms of assembly, heterotrimer of A, B and C subunits.

It catalyses the reaction L-glutamyl-tRNA(Gln) + L-glutamine + ATP + H2O = L-glutaminyl-tRNA(Gln) + L-glutamate + ADP + phosphate + H(+). The catalysed reaction is L-aspartyl-tRNA(Asn) + L-glutamine + ATP + H2O = L-asparaginyl-tRNA(Asn) + L-glutamate + ADP + phosphate + 2 H(+). Functionally, allows the formation of correctly charged Asn-tRNA(Asn) or Gln-tRNA(Gln) through the transamidation of misacylated Asp-tRNA(Asn) or Glu-tRNA(Gln) in organisms which lack either or both of asparaginyl-tRNA or glutaminyl-tRNA synthetases. The reaction takes place in the presence of glutamine and ATP through an activated phospho-Asp-tRNA(Asn) or phospho-Glu-tRNA(Gln). In Rhodococcus jostii (strain RHA1), this protein is Aspartyl/glutamyl-tRNA(Asn/Gln) amidotransferase subunit B.